The chain runs to 181 residues: ATP synthase subunit delta (181 aa).

The protein belongs to the ATPase delta chain family. In terms of assembly, F-type ATPases have 2 components, F(1) - the catalytic core - and F(0) - the membrane proton channel. F(1) has five subunits: alpha(3), beta(3), gamma(1), delta(1), epsilon(1). F(0) has three main subunits: a(1), b(2) and c(10-14). The alpha and beta chains form an alternating ring which encloses part of the gamma chain. F(1) is attached to F(0) by a central stalk formed by the gamma and epsilon chains, while a peripheral stalk is formed by the delta and b chains.

Its subcellular location is the cell membrane. In terms of biological role, f(1)F(0) ATP synthase produces ATP from ADP in the presence of a proton or sodium gradient. F-type ATPases consist of two structural domains, F(1) containing the extramembraneous catalytic core and F(0) containing the membrane proton channel, linked together by a central stalk and a peripheral stalk. During catalysis, ATP synthesis in the catalytic domain of F(1) is coupled via a rotary mechanism of the central stalk subunits to proton translocation. Functionally, this protein is part of the stalk that links CF(0) to CF(1). It either transmits conformational changes from CF(0) to CF(1) or is implicated in proton conduction. The protein is ATP synthase subunit delta of Lacticaseibacillus casei (strain BL23) (Lactobacillus casei).